We begin with the raw amino-acid sequence, 174 residues long: Repair DNA polymerase X (174 aa).

The involved in ssDNA binding stretch occupies residues 42–51; sequence REEKMLNDVD. Residues Asp49 and Asp51 each coordinate Mg(2+). Cys81 and Cys86 are joined by a disulfide. Asp100 is a Mg(2+) binding site.

It belongs to the DNA polymerase type-X family. Requires Mg(2+) as cofactor.

It is found in the virion. The catalysed reaction is DNA(n) + a 2'-deoxyribonucleoside 5'-triphosphate = DNA(n+1) + diphosphate. Error-prone polymerase lacking a proofreading 3'-5' exonuclease which catalyzes the gap-filling reaction during the DNA repair process. Specifically binds intermediates in the single-nucleotide base-excision repair process. Also catalyzes DNA polymerization with low nucleotide-insertion fidelity. Probably acts as a strategic DNA mutase, which gives rise to a rapid emergence of variants. Generates mismatched G-G pairs, in that case, the polymerase first binds the deoxynucleotide followed by mismatch formation. Together with the viral DNA ligase, fills the single nucleotide gaps generated by the AP endonuclease. Binds DNA with high affinity via the helix alphaE. This is Repair DNA polymerase X from Ornithodoros (relapsing fever ticks).